A 186-amino-acid polypeptide reads, in one-letter code: ATP synthase subunit b 3 (186 aa).

The helical transmembrane segment at 5-25 (LLPALLTFSATPALAAKGPFF) threads the bilayer.

Belongs to the ATPase B chain family. As to quaternary structure, F-type ATPases have 2 components, F(1) - the catalytic core - and F(0) - the membrane proton channel. F(1) has five subunits: alpha(3), beta(3), gamma(1), delta(1), epsilon(1). F(0) has three main subunits: a(1), b(2) and c(10-14). The alpha and beta chains form an alternating ring which encloses part of the gamma chain. F(1) is attached to F(0) by a central stalk formed by the gamma and epsilon chains, while a peripheral stalk is formed by the delta and b chains.

The protein resides in the cell inner membrane. Functionally, f(1)F(0) ATP synthase produces ATP from ADP in the presence of a proton or sodium gradient. F-type ATPases consist of two structural domains, F(1) containing the extramembraneous catalytic core and F(0) containing the membrane proton channel, linked together by a central stalk and a peripheral stalk. During catalysis, ATP synthesis in the catalytic domain of F(1) is coupled via a rotary mechanism of the central stalk subunits to proton translocation. Its function is as follows. Component of the F(0) channel, it forms part of the peripheral stalk, linking F(1) to F(0). The sequence is that of ATP synthase subunit b 3 from Dinoroseobacter shibae (strain DSM 16493 / NCIMB 14021 / DFL 12).